The primary structure comprises 1099 residues: DNA-directed RNA polymerase subunit beta (1099 aa).

It belongs to the RNA polymerase beta chain family. In plastids the minimal PEP RNA polymerase catalytic core is composed of four subunits: alpha, beta, beta', and beta''. When a (nuclear-encoded) sigma factor is associated with the core the holoenzyme is formed, which can initiate transcription.

It localises to the plastid. The protein resides in the chloroplast. The enzyme catalyses RNA(n) + a ribonucleoside 5'-triphosphate = RNA(n+1) + diphosphate. Its function is as follows. DNA-dependent RNA polymerase catalyzes the transcription of DNA into RNA using the four ribonucleoside triphosphates as substrates. This is DNA-directed RNA polymerase subunit beta from Bigelowiella natans (Pedinomonas minutissima).